The primary structure comprises 441 residues: Dolichyl-diphosphooligosaccharide--protein glycosyltransferase 48 kDa subunit (441 aa).

Residues 1 to 28 (MATALSGGFSKNALFILSAALMLQAVLG) form the signal peptide. The Lumenal segment spans residues 29 to 410 (DGKTLVLLDN…TQYERFIPSA (382 aa)). A helical transmembrane segment spans residues 411 to 431 (FPYYASAFSMMAGLFVFSVVF). The Cytoplasmic portion of the chain corresponds to 432-441 (LHMREKEKSD).

Belongs to the DDOST 48 kDa subunit family. In terms of assembly, component of the oligosaccharyltransferase (OST) complex.

The protein localises to the endoplasmic reticulum membrane. Its pathway is protein modification; protein glycosylation. In terms of biological role, subunit of the oligosaccharyl transferase (OST) complex that catalyzes the initial transfer of a defined glycan (Glc(3)Man(9)GlcNAc(2) in eukaryotes) from the lipid carrier dolichol-pyrophosphate to an asparagine residue within an Asn-X-Ser/Thr consensus motif in nascent polypeptide chains, the first step in protein N-glycosylation. N-glycosylation occurs cotranslationally and the complex associates with the Sec61 complex at the channel-forming translocon complex that mediates protein translocation across the endoplasmic reticulum (ER). All subunits are required for a maximal enzyme activity. Required for the assembly of both SST3A- and SS3B-containing OST complexes. The protein is Dolichyl-diphosphooligosaccharide--protein glycosyltransferase 48 kDa subunit of Danio rerio (Zebrafish).